A 338-amino-acid chain; its full sequence is Heat-inducible transcription repressor HrcA (338 aa).

It belongs to the HrcA family.

In terms of biological role, negative regulator of class I heat shock genes (grpE-dnaK-dnaJ and groELS operons). Prevents heat-shock induction of these operons. This Thermotoga sp. (strain RQ2) protein is Heat-inducible transcription repressor HrcA.